A 173-amino-acid polypeptide reads, in one-letter code: Ribosome maturation factor RimM (173 aa).

Residues 96–169 form the PRC barrel domain; that stretch reads PDEYYDHQLE…LVEIDPPEGL (74 aa).

Belongs to the RimM family. In terms of assembly, binds ribosomal protein uS19.

The protein localises to the cytoplasm. Functionally, an accessory protein needed during the final step in the assembly of 30S ribosomal subunit, possibly for assembly of the head region. Essential for efficient processing of 16S rRNA. May be needed both before and after RbfA during the maturation of 16S rRNA. It has affinity for free ribosomal 30S subunits but not for 70S ribosomes. This Mycobacterium sp. (strain JLS) protein is Ribosome maturation factor RimM.